We begin with the raw amino-acid sequence, 66 residues long: Large ribosomal subunit protein bL32 (66 aa).

The interval 1-20 (MAVPKRRKSKSKVRTKRAHH) is disordered.

This sequence belongs to the bacterial ribosomal protein bL32 family.

In Leptospira borgpetersenii serovar Hardjo-bovis (strain JB197), this protein is Large ribosomal subunit protein bL32.